A 593-amino-acid polypeptide reads, in one-letter code: Proline--tRNA ligase (593 aa).

The protein belongs to the class-II aminoacyl-tRNA synthetase family. ProS type 1 subfamily. In terms of assembly, homodimer.

The protein localises to the cytoplasm. It catalyses the reaction tRNA(Pro) + L-proline + ATP = L-prolyl-tRNA(Pro) + AMP + diphosphate. In terms of biological role, catalyzes the attachment of proline to tRNA(Pro) in a two-step reaction: proline is first activated by ATP to form Pro-AMP and then transferred to the acceptor end of tRNA(Pro). As ProRS can inadvertently accommodate and process non-cognate amino acids such as alanine and cysteine, to avoid such errors it has two additional distinct editing activities against alanine. One activity is designated as 'pretransfer' editing and involves the tRNA(Pro)-independent hydrolysis of activated Ala-AMP. The other activity is designated 'posttransfer' editing and involves deacylation of mischarged Ala-tRNA(Pro). The misacylated Cys-tRNA(Pro) is not edited by ProRS. The chain is Proline--tRNA ligase from Synechococcus sp. (strain CC9605).